The sequence spans 693 residues: Glycine--tRNA ligase beta subunit (693 aa).

This sequence belongs to the class-II aminoacyl-tRNA synthetase family. In terms of assembly, tetramer of two alpha and two beta subunits.

The protein localises to the cytoplasm. It carries out the reaction tRNA(Gly) + glycine + ATP = glycyl-tRNA(Gly) + AMP + diphosphate. The polypeptide is Glycine--tRNA ligase beta subunit (Shouchella clausii (strain KSM-K16) (Alkalihalobacillus clausii)).